Reading from the N-terminus, the 549-residue chain is Glucose-6-phosphate isomerase (549 aa).

The Proton donor role is filled by glutamate 355. Catalysis depends on residues histidine 386 and lysine 514.

Belongs to the GPI family.

It is found in the cytoplasm. The catalysed reaction is alpha-D-glucose 6-phosphate = beta-D-fructose 6-phosphate. It participates in carbohydrate biosynthesis; gluconeogenesis. Its pathway is carbohydrate degradation; glycolysis; D-glyceraldehyde 3-phosphate and glycerone phosphate from D-glucose: step 2/4. Functionally, catalyzes the reversible isomerization of glucose-6-phosphate to fructose-6-phosphate. In Sodalis glossinidius (strain morsitans), this protein is Glucose-6-phosphate isomerase.